A 577-amino-acid polypeptide reads, in one-letter code: Proline--tRNA ligase (577 aa).

This sequence belongs to the class-II aminoacyl-tRNA synthetase family. ProS type 1 subfamily. As to quaternary structure, homodimer.

It localises to the cytoplasm. It catalyses the reaction tRNA(Pro) + L-proline + ATP = L-prolyl-tRNA(Pro) + AMP + diphosphate. Its function is as follows. Catalyzes the attachment of proline to tRNA(Pro) in a two-step reaction: proline is first activated by ATP to form Pro-AMP and then transferred to the acceptor end of tRNA(Pro). As ProRS can inadvertently accommodate and process non-cognate amino acids such as alanine and cysteine, to avoid such errors it has two additional distinct editing activities against alanine. One activity is designated as 'pretransfer' editing and involves the tRNA(Pro)-independent hydrolysis of activated Ala-AMP. The other activity is designated 'posttransfer' editing and involves deacylation of mischarged Ala-tRNA(Pro). The misacylated Cys-tRNA(Pro) is not edited by ProRS. This chain is Proline--tRNA ligase, found in Thermotoga neapolitana (strain ATCC 49049 / DSM 4359 / NBRC 107923 / NS-E).